Here is a 515-residue protein sequence, read N- to C-terminus: 2,3-bisphosphoglycerate-independent phosphoglycerate mutase (515 aa).

Mn(2+) contacts are provided by D14 and S63. The active site involves S63. Substrate-binding positions include H124, 154–155 (RD), R186, R192, 259–262 (RADR), and K334. Residues D401, H405, D442, H443, and H460 each contribute to the Mn(2+) site.

It belongs to the BPG-independent phosphoglycerate mutase family. Requires Mg(2+) as cofactor. It depends on Mn(2+) as a cofactor.

It catalyses the reaction (2R)-2-phosphoglycerate = (2R)-3-phosphoglycerate. It participates in carbohydrate degradation; glycolysis; pyruvate from D-glyceraldehyde 3-phosphate: step 3/5. Its activity is regulated as follows. Activity is not affected by 2,3-bisphosphoglycerate. Catalyzes the interconversion of 2-phosphoglycerate and 3-phosphoglycerate. This chain is 2,3-bisphosphoglycerate-independent phosphoglycerate mutase, found in Onchocerca volvulus.